Reading from the N-terminus, the 374-residue chain is Nucleosome assembly protein 1;1 (374 aa).

Residues 26–80 (VNALKNKLQDITGKPTNVLECLSPNVRKRVEVLKEIQSQHDELEAKFYEERAVLE) are a coiled coil. Residues 47–62 (LSPNVRKRVEVLKEIQ) carry the Nuclear export signal motif. Positions 223-228 (KKKPKK) match the Nuclear localization signal motif. A compositionally biased stretch (acidic residues) spans 299–339 (AAEDDFADLEDDDDDDEEDDDDEDEEEEDDEDDEDEEDEDD). A disordered region spans residues 299–374 (AAEDDFADLE…GERPPECKQQ (76 aa)). The segment covering 343-355 (KKKSSAVRKRGVR) has biased composition (basic residues). Cysteine methyl ester is present on cysteine 371. Cysteine 371 is lipidated: S-farnesyl cysteine. Residues 372–374 (KQQ) constitute a propeptide, removed in mature form.

This sequence belongs to the nucleosome assembly protein (NAP) family. In terms of assembly, binds preferentially histones H4 and H1 in vitro. Interacts with CYCB1;1.

The protein resides in the nucleus. Its subcellular location is the cytoplasm. May modulate chromatin structure by regulation of nucleosome assembly/disassembly. Could function together with B-type cyclins in the regulation of microtubule dynamics. The polypeptide is Nucleosome assembly protein 1;1 (NAP1;1) (Nicotiana tabacum (Common tobacco)).